A 337-amino-acid chain; its full sequence is Low-density lipoprotein receptor class A domain-containing protein 3 (337 aa).

The first 13 residues, 1-13 (MWLLYLILGSVES), serve as a signal peptide directing secretion. At 14-169 (QLLPGNNHTT…NQLLYYPSIT (156 aa)) the chain is on the extracellular side. Asparagine 20 is a glycosylation site (N-linked (GlcNAc...) asparagine). 3 consecutive LDL-receptor class A domains span residues 24–61 (ECNI…KECP), 66–103 (RCGP…ENCT), and 108–144 (LCSN…EHCH). 9 cysteine pairs are disulfide-bonded: cysteine 25–cysteine 38, cysteine 33–cysteine 51, cysteine 45–cysteine 60, cysteine 67–cysteine 80, cysteine 74–cysteine 93, cysteine 87–cysteine 102, cysteine 109–cysteine 121, cysteine 116–cysteine 134, and cysteine 128–cysteine 143. An N-linked (GlcNAc...) asparagine glycan is attached at asparagine 101. Residues 170–190 (YTIIGSSVIFVLVVALLALVL) form a helical membrane-spanning segment. Residues 191–337 (HHQRKRNLMS…DDLPSTEVDV (147 aa)) are Cytoplasmic-facing. The segment covering 243–253 (QQPVSVESPPS) has biased composition (polar residues). Residues 243 to 337 (QQPVSVESPP…DDLPSTEVDV (95 aa)) form a disordered region. Low complexity predominate over residues 291–303 (RSRTGSSASAGST).

The protein belongs to the LDLR family.

The protein resides in the cell membrane. This is Low-density lipoprotein receptor class A domain-containing protein 3 from Xenopus tropicalis (Western clawed frog).